The following is a 739-amino-acid chain: NAD(P)H-quinone oxidoreductase subunit 5, chloroplastic (739 aa).

The next 16 helical transmembrane spans lie at Trp9–Phe29, Trp40–Ile60, Ile89–Ile109, Phe125–Ile145, Ile147–Thr167, Gly185–Phe205, Asn219–Ala239, Thr258–Ala278, Val286–Ala306, Leu327–Ile347, Ala354–Ser374, Ile396–Ser416, Trp425–Tyr445, Leu543–Phe563, Val602–Ile622, and Ser717–Phe737.

It belongs to the complex I subunit 5 family. As to quaternary structure, NDH is composed of at least 16 different subunits, 5 of which are encoded in the nucleus.

The protein localises to the plastid. It is found in the chloroplast thylakoid membrane. It catalyses the reaction a plastoquinone + NADH + (n+1) H(+)(in) = a plastoquinol + NAD(+) + n H(+)(out). The catalysed reaction is a plastoquinone + NADPH + (n+1) H(+)(in) = a plastoquinol + NADP(+) + n H(+)(out). Its function is as follows. NDH shuttles electrons from NAD(P)H:plastoquinone, via FMN and iron-sulfur (Fe-S) centers, to quinones in the photosynthetic chain and possibly in a chloroplast respiratory chain. The immediate electron acceptor for the enzyme in this species is believed to be plastoquinone. Couples the redox reaction to proton translocation, and thus conserves the redox energy in a proton gradient. This is NAD(P)H-quinone oxidoreductase subunit 5, chloroplastic (ndhF) from Solanum tuberosum (Potato).